Consider the following 1571-residue polypeptide: Pentafunctional AROM polypeptide (1571 aa).

Residues 1 to 384 form a 3-dehydroquinate synthase region; sequence MEQPTTIQIL…HEQKASVVSN (384 aa). Residues 44–46, 81–84, 114–116, and Asp119 contribute to the NAD(+) site; these read DTN, ESSK, and GGV. Position 130 (Arg130) interacts with 7-phospho-2-dehydro-3-deoxy-D-arabino-heptonate. 139 to 140 contributes to the NAD(+) binding site; the sequence is TT. 7-phospho-2-dehydro-3-deoxy-D-arabino-heptonate is bound by residues Asp146 and Lys152. NAD(+) is bound at residue Lys161. Asn162 is a binding site for 7-phospho-2-dehydro-3-deoxy-D-arabino-heptonate. Residues 179 to 182 and Asn190 contribute to the NAD(+) site; that span reads FLNT. Position 194 (Glu194) interacts with Zn(2+). Residues 194–197 and Lys250 each bind 7-phospho-2-dehydro-3-deoxy-D-arabino-heptonate; that span reads EVIK. The Proton acceptor; for 3-dehydroquinate synthase activity role is filled by Glu260. 7-phospho-2-dehydro-3-deoxy-D-arabino-heptonate-binding positions include 264-268 and His271; that span reads RNLLN. Residue His271 coordinates Zn(2+). Catalysis depends on His275, which acts as the Proton acceptor; for 3-dehydroquinate synthase activity. 7-phospho-2-dehydro-3-deoxy-D-arabino-heptonate contacts are provided by His287 and Lys356. Zn(2+) is bound at residue His287. The EPSP synthase stretch occupies residues 397–843; it reads VLPGIPKPLN…WDALAQTFKV (447 aa). Cys825 serves as the catalytic For EPSP synthase activity. The interval 866–1057 is shikimate kinase; that stretch reads ASIFIIGMRG…KKKDHSFFVS (192 aa). An ATP-binding site is contributed by 872–879; the sequence is GMRGAGKT. The interval 1058–1278 is 3-dehydroquinase; sequence LTLPDLQLSA…AAPGQVSAKD (221 aa). His1181 (proton acceptor; for 3-dehydroquinate dehydratase activity) is an active-site residue. The Schiff-base intermediate with substrate; for 3-dehydroquinate dehydratase activity role is filled by Lys1209. Residues 1291 to 1571 are shikimate dehydrogenase; that stretch reads AKKFALFGKP…EDARAAVMNI (281 aa).

It in the N-terminal section; belongs to the sugar phosphate cyclases superfamily. Dehydroquinate synthase family. The protein in the 2nd section; belongs to the EPSP synthase family. This sequence in the 3rd section; belongs to the shikimate kinase family. In the 4th section; belongs to the type-I 3-dehydroquinase family. It in the C-terminal section; belongs to the shikimate dehydrogenase family. In terms of assembly, homodimer. It depends on Zn(2+) as a cofactor.

The protein resides in the cytoplasm. It catalyses the reaction 7-phospho-2-dehydro-3-deoxy-D-arabino-heptonate = 3-dehydroquinate + phosphate. It carries out the reaction 3-dehydroquinate = 3-dehydroshikimate + H2O. The enzyme catalyses shikimate + NADP(+) = 3-dehydroshikimate + NADPH + H(+). The catalysed reaction is shikimate + ATP = 3-phosphoshikimate + ADP + H(+). It catalyses the reaction 3-phosphoshikimate + phosphoenolpyruvate = 5-O-(1-carboxyvinyl)-3-phosphoshikimate + phosphate. It functions in the pathway metabolic intermediate biosynthesis; chorismate biosynthesis; chorismate from D-erythrose 4-phosphate and phosphoenolpyruvate: step 2/7. The protein operates within metabolic intermediate biosynthesis; chorismate biosynthesis; chorismate from D-erythrose 4-phosphate and phosphoenolpyruvate: step 3/7. Its pathway is metabolic intermediate biosynthesis; chorismate biosynthesis; chorismate from D-erythrose 4-phosphate and phosphoenolpyruvate: step 4/7. It participates in metabolic intermediate biosynthesis; chorismate biosynthesis; chorismate from D-erythrose 4-phosphate and phosphoenolpyruvate: step 5/7. It functions in the pathway metabolic intermediate biosynthesis; chorismate biosynthesis; chorismate from D-erythrose 4-phosphate and phosphoenolpyruvate: step 6/7. The AROM polypeptide catalyzes 5 consecutive enzymatic reactions in prechorismate polyaromatic amino acid biosynthesis. This Arthroderma otae (strain ATCC MYA-4605 / CBS 113480) (Microsporum canis) protein is Pentafunctional AROM polypeptide.